The chain runs to 449 residues: Protein cortex (449 aa).

WD repeat units follow at residues 108–148, 149–188, 198–237, 283–327, 345–382, and 386–425; these read TYSY…ISQG, YAEY…KIDS, NRNC…ISWR, DSDW…VRDT, TGEL…DQWG, and SGLD…KKMK. The short motif at 386–397 is the D-box element; sequence SGLDRVRTMVFS.

This sequence belongs to the WD repeat CORT family.

Its subcellular location is the cytoplasm. Its function is as follows. Controls wing pigmentation patterning by regulating scale cell development, thereby playing a key role in mimicry and crypsis. Probably acts as an activator of the anaphase promoting complex/cyclosome (APC/C) that promotes the ubiquitin ligase activity and substrate specificity of the APC/C. The sequence is that of Protein cortex from Heliconius erato (Crimson patched longwing butterfly).